The primary structure comprises 124 residues: Flowering-promoting factor 1-like protein 1 (124 aa).

Positions 19–42 (PYNQSAGDSSESSSSGGNQQQRMR) are disordered. The segment covering 22-39 (QSAGDSSESSSSGGNQQQ) has biased composition (low complexity).

The protein belongs to the FPF1 family. Expressed in roots, flowers, and at a low level, in leaves.

Modulates the competence to flowering of apical meristems. This is Flowering-promoting factor 1-like protein 1 (FLP1) from Arabidopsis thaliana (Mouse-ear cress).